Reading from the N-terminus, the 250-residue chain is MSALLSPDQLEADLRAIGARLYHDQHPFHALLHHGKLDRGQVQAWALNRFEYQRCIPLKDAAILARMEDPALRRIWRQRIVDHDGNSATDGGIARWLHLTDALGLDRTLVESGRALLPGTRFAVQAYLQFVSEKSLLEAIASSLTELFAPNIIGQRVAGMLKHYDFVSSDALAYFEHRLTEAPRDSDFALDYVKQHADTVEKQALVKAALHFKCSVLWAQLDALHVAYVTPGIVWPDAFVPDRDASRVAA.

This sequence belongs to the PqqC family.

The catalysed reaction is 6-(2-amino-2-carboxyethyl)-7,8-dioxo-1,2,3,4,7,8-hexahydroquinoline-2,4-dicarboxylate + 3 O2 = pyrroloquinoline quinone + 2 H2O2 + 2 H2O + H(+). The protein operates within cofactor biosynthesis; pyrroloquinoline quinone biosynthesis. In terms of biological role, ring cyclization and eight-electron oxidation of 3a-(2-amino-2-carboxyethyl)-4,5-dioxo-4,5,6,7,8,9-hexahydroquinoline-7,9-dicarboxylic-acid to PQQ. This Xanthomonas oryzae pv. oryzae (strain KACC10331 / KXO85) protein is Pyrroloquinoline-quinone synthase.